The following is a 285-amino-acid chain: MEIIIISGRSGAGKSVALRALEDAGYYCVDNIPLDLLPQLTDILSQSQSSVAISLDIRNIPNSAHSLKQTLSTLQKHHQIKIIFLEADRATLIRRYSDSRRLHPLSLKDLSLEAAIDEEYRYLEPLIQHANLILDTTHLSTHSLAERLREFLRGNSEKELKIIVESFGFKYGIPLDADYVFDVRFLPNPHWDPTLRPMTGLEAPVAEFLNSHTEVNEFIYLTRHYIDTWLPMLEKNNRSYLTIAIGCTGGKHRSVYIAQQLGEYFQAKGKTVKIQHKSLERNKKI.

Residue 8 to 15 (GRSGAGKS) coordinates ATP. Residue 56-59 (DIRN) participates in GTP binding.

It belongs to the RapZ-like family.

Its function is as follows. Displays ATPase and GTPase activities. The protein is Nucleotide-binding protein HI_1146 of Haemophilus influenzae (strain ATCC 51907 / DSM 11121 / KW20 / Rd).